Reading from the N-terminus, the 130-residue chain is uncharacterized protein (130 aa).

A helical transmembrane segment spans residues 15 to 31 (LYLCPAIIRLSSVCTLA).

Its subcellular location is the membrane. This is an uncharacterized protein from Saccharomyces cerevisiae (strain ATCC 204508 / S288c) (Baker's yeast).